Reading from the N-terminus, the 144-residue chain is Large ribosomal subunit protein uL15 (144 aa).

Positions 1–52 are disordered; the sequence is MRLNTLSPAEGAKHAPKRVGRGIGSGLGKTAGRGHKGQNSRSGGGVRRGFEG. Residues 21-31 are compositionally biased toward gly residues; it reads RGIGSGLGKTA.

The protein belongs to the universal ribosomal protein uL15 family. Part of the 50S ribosomal subunit.

In terms of biological role, binds to the 23S rRNA. The chain is Large ribosomal subunit protein uL15 from Yersinia pseudotuberculosis serotype O:1b (strain IP 31758).